The following is a 1098-amino-acid chain: Platelet-derived growth factor receptor beta (1098 aa).

The first 31 residues, 1 to 31, serve as a signal peptide directing secretion; sequence MGLPGVIPALVLRGQLLLSVLWLLGPQTSRG. Topologically, residues 32–531 are extracellular; that stretch reads LVITPPGPEF…VVPHSLPFKV (500 aa). Ig-like C2-type domains follow at residues 33–119, 128–209, 213–308, 330–402, and 415–523; these read VITP…YIFV, PMDS…YSLQ, INVS…INIS, HRSR…HEDD, and PVRV…VTVV. N-linked (GlcNAc...) asparagine glycans are attached at residues Asn-44, Asn-88, and Asn-102. An intrachain disulfide couples Cys-53 to Cys-99. The cysteines at positions 148 and 189 are disulfide-linked. A glycan (N-linked (GlcNAc...) asparagine) is linked at Asn-214. Cys-234 and Cys-290 are joined by a disulfide. N-linked (GlcNAc...) asparagine glycans are attached at residues Asn-291, Asn-306, Asn-353, Asn-370, Asn-444, Asn-467, and Asn-478. Cysteines 435 and 507 form a disulfide. A helical transmembrane segment spans residues 532–552; that stretch reads VVISAILALVVLTVISLIILI. The Cytoplasmic portion of the chain corresponds to 553–1098; it reads MLWQKKPRYE…PLAEAEDSFL (546 aa). Residues Tyr-561, Tyr-578, and Tyr-580 each carry the phosphotyrosine; by autocatalysis modification. Residues 599–961 enclose the Protein kinase domain; sequence LVLGRTLGSG…QLVLLLERLL (363 aa). Residues 605 to 613 and Lys-633 contribute to the ATP site; that span reads LGSGAFGQV. Tyr-685 carries the phosphotyrosine; by ABL1 and ABL2 modification. Phosphotyrosine; by autocatalysis is present on residues Tyr-715, Tyr-739, Tyr-750, Tyr-762, Tyr-770, Tyr-774, and Tyr-777. Catalysis depends on Asp-825, which acts as the Proton acceptor. Residue Tyr-856 is modified to Phosphotyrosine; by autocatalysis. Phosphotyrosine; by ABL1 and ABL2 occurs at positions 933 and 969. A phosphotyrosine; by autocatalysis mark is found at Tyr-1008 and Tyr-1020. Residues 1016-1098 are disordered; the sequence is SDNDYIIPLP…PLAEAEDSFL (83 aa). Residues 1042–1059 show a composition bias toward polar residues; it reads SLASSTLNEVNTSSTISC. Residues 1062 to 1082 are compositionally biased toward low complexity; that stretch reads PLELQEEPQQAEPEAQLEQPQ.

Belongs to the protein kinase superfamily. Tyr protein kinase family. CSF-1/PDGF receptor subfamily. In terms of assembly, interacts with homodimeric PDGFB and PDGFD, and with heterodimers formed by PDGFA and PDGFB. May also interact with homodimeric PDGFC. Monomer in the absence of bound ligand. Interaction with homodimeric PDGFB, heterodimers formed by PDGFA and PDGFB or homodimeric PDGFD, leads to receptor dimerization, where both PDGFRA homodimers and heterodimers with PDGFRB are observed. Interacts with SH2B2/APS. Interacts directly (tyrosine phosphorylated) with SHB. Interacts (tyrosine phosphorylated) with PIK3R1 and RASA1. Interacts (tyrosine phosphorylated) with CBL. Interacts (tyrosine phosphorylated) with SRC and SRC family kinases. Interacts (tyrosine phosphorylated) with PIK3C2B, maybe indirectly. Interacts (tyrosine phosphorylated) with SHC1, GRB7, GRB10 and NCK1. Interaction with GRB2 is mediated by SHC1. Interacts (via C-terminus) with NHERF1. In terms of processing, autophosphorylated on tyrosine residues upon ligand binding. Autophosphorylation occurs in trans, i.e. one subunit of the dimeric receptor phosphorylates tyrosine residues on the other subunit. Phosphorylation at Tyr-578, and to a lesser degree, Tyr-580 is important for interaction with SRC. Phosphorylation at Tyr-715 is important for interaction with GRB2. Phosphorylation at Tyr-739 and Tyr-750 is important for interaction with PIK3R1. Phosphorylation at Tyr-750 is important for interaction with NCK1. Phosphorylation at Tyr-770 and Tyr-856 is important for interaction with RASA1/GAP. Phosphorylation at Tyr-856 is important for efficient phosphorylation of PLCG1 and PTPN11, resulting in increased phosphorylation of AKT1, MAPK1/ERK2 and/or MAPK3/ERK1, PDCD6IP/ALIX and STAM, and in increased cell proliferation. Phosphorylation at Tyr-1008 is important for interaction with PTPN11. Phosphorylation at Tyr-1008 and Tyr-1020 is important for interaction with PLCG1. Dephosphorylated by PTPRJ at Tyr-750, Tyr-856, Tyr-1008 and Tyr-1020. Dephosphorylated by PTPN2 at Tyr-578 and Tyr-1020. Post-translationally, N-glycosylated. Ubiquitinated. After autophosphorylation, the receptor is polyubiquitinated, leading to its degradation. In terms of tissue distribution, weakly expressed in glomerular mesangial cells and interstitial cells. Up-regulated in areas of renal fibrosis. In mice with unilateral ureteral obstruction, increased expression in interstitial cells at day 4 and expression is markedly elevated at day 7 and is maximal at day 14.

Its subcellular location is the cell membrane. The protein localises to the cytoplasmic vesicle. The protein resides in the lysosome lumen. The catalysed reaction is L-tyrosyl-[protein] + ATP = O-phospho-L-tyrosyl-[protein] + ADP + H(+). Present in an inactive conformation in the absence of bound ligand. Binding of PDGFB and/or PDGFD leads to dimerization and activation by autophosphorylation on tyrosine residues. In terms of biological role, tyrosine-protein kinase that acts as a cell-surface receptor for homodimeric PDGFB and PDGFD and for heterodimers formed by PDGFA and PDGFB, and plays an essential role in the regulation of embryonic development, cell proliferation, survival, differentiation, chemotaxis and migration. Plays an essential role in blood vessel development by promoting proliferation, migration and recruitment of pericytes and smooth muscle cells to endothelial cells. Plays a role in the migration of vascular smooth muscle cells and the formation of neointima at vascular injury sites. Required for normal development of the cardiovascular system. Required for normal recruitment of pericytes (mesangial cells) in the kidney glomerulus, and for normal formation of a branched network of capillaries in kidney glomeruli. Promotes rearrangement of the actin cytoskeleton and the formation of membrane ruffles. Binding of its cognate ligands - homodimeric PDGFB, heterodimers formed by PDGFA and PDGFB or homodimeric PDGFD -leads to the activation of several signaling cascades; the response depends on the nature of the bound ligand and is modulated by the formation of heterodimers between PDGFRA and PDGFRB. Phosphorylates PLCG1, PIK3R1, PTPN11, RASA1/GAP, CBL, SHC1 and NCK1. Activation of PLCG1 leads to the production of the cellular signaling molecules diacylglycerol and inositol 1,4,5-trisphosphate, mobilization of cytosolic Ca(2+) and the activation of protein kinase C. Phosphorylation of PIK3R1, the regulatory subunit of phosphatidylinositol 3-kinase, leads to the activation of the AKT1 signaling pathway. Phosphorylation of SHC1, or of the C-terminus of PTPN11, creates a binding site for GRB2, resulting in the activation of HRAS, RAF1 and down-stream MAP kinases, including MAPK1/ERK2 and/or MAPK3/ERK1. Promotes phosphorylation and activation of SRC family kinases. Promotes phosphorylation of PDCD6IP/ALIX and STAM. Receptor signaling is down-regulated by protein phosphatases that dephosphorylate the receptor and its down-stream effectors, and by rapid internalization of the activated receptor. The chain is Platelet-derived growth factor receptor beta (Pdgfrb) from Mus musculus (Mouse).